Reading from the N-terminus, the 166-residue chain is Chorion protein S18 (166 aa).

The first 17 residues, 1 to 17, serve as a signal peptide directing secretion; sequence MMKFMCLFVCAIAAVSA.

It belongs to the chorion protein S15/S18 family.

The protein resides in the secreted. In terms of biological role, chorion membrane (egg shell) protein; plays a role in protecting the egg from the environment. The chain is Chorion protein S18 (Cp18) from Drosophila grimshawi (Hawaiian fruit fly).